A 150-amino-acid polypeptide reads, in one-letter code: Viral late gene transcription factor 2 (150 aa).

The protein belongs to the orthopoxvirus VLTF-2/OPG126 family. As to quaternary structure, interacts with the late transcription elongation factor VLTF-4/OPG110. Interacts with the late transcription factors VLTF-1/OPG093.

Acts with RNA polymerase to initiate transcription from late gene promoters. The chain is Viral late gene transcription factor 2 (OPG126) from Monkeypox virus.